Consider the following 334-residue polypeptide: uncharacterized protein (334 aa).

Belongs to the Gfo/Idh/MocA family.

This is an uncharacterized protein from Rhizobium meliloti (Ensifer meliloti).